The primary structure comprises 201 residues: Lipopolysaccharide core heptose(II)-phosphate phosphatase (201 aa).

Residues 1 to 35 (MLAFTLRFIKNKRYLATLAGALVIIAGLTSQHAWS) form the signal peptide.

This sequence belongs to the phosphoglycerate mutase family. Ais subfamily.

The protein resides in the periplasm. Its pathway is bacterial outer membrane biogenesis; lipopolysaccharide metabolism. Functionally, catalyzes the dephosphorylation of heptose(II) of the outer membrane lipopolysaccharide core. In Salmonella heidelberg (strain SL476), this protein is Lipopolysaccharide core heptose(II)-phosphate phosphatase.